A 573-amino-acid chain; its full sequence is Zinc finger protein 10 (573 aa).

Positions 14–85 (VTFKDVFVDF…EREIHQETHP (72 aa)) constitute a KRAB domain. The C2H2-type 1; atypical zinc-finger motif lies at 206-232 (DSCASNSNECGQTFCQNIHLIQFARTH). 9 consecutive C2H2-type zinc fingers follow at residues 265 to 287 (YECK…QLIH), 293 to 315 (YECK…QKTH), 321 to 343 (YECK…QRTH), 349 to 371 (YTCN…QRTH), 377 to 399 (YECP…QRTH), 405 to 427 (YECN…HRIH), 433 to 455 (FECK…QRTH), 461 to 483 (YECH…QRIH), and 489 to 511 (YECC…QRIH). Residues 517–539 (YKCNQCGIIFSQNSPFIVHQIAH) form a C2H2-type 11; atypical zinc finger.

This sequence belongs to the krueppel C2H2-type zinc-finger protein family. Interacts (via the KRAB domain) with TRIM28 (via the RBCC domain).

The protein resides in the nucleus. Its function is as follows. May be involved in transcriptional regulation. In Homo sapiens (Human), this protein is Zinc finger protein 10 (ZNF10).